The sequence spans 160 residues: Phosphopantetheine adenylyltransferase (160 aa).

Ser9 is a substrate binding site. ATP contacts are provided by residues 9-10 and His17; that span reads SF. Residues Lys41, Val73, and Lys87 each contribute to the substrate site. ATP is bound by residues 88-90, Glu98, and 122-128; these read GLR and YSFVSSS.

It belongs to the bacterial CoaD family. In terms of assembly, homohexamer. The cofactor is Mg(2+).

The protein localises to the cytoplasm. It catalyses the reaction (R)-4'-phosphopantetheine + ATP + H(+) = 3'-dephospho-CoA + diphosphate. It functions in the pathway cofactor biosynthesis; coenzyme A biosynthesis; CoA from (R)-pantothenate: step 4/5. Its function is as follows. Reversibly transfers an adenylyl group from ATP to 4'-phosphopantetheine, yielding dephospho-CoA (dPCoA) and pyrophosphate. The sequence is that of Phosphopantetheine adenylyltransferase from Mycobacterium leprae (strain TN).